The primary structure comprises 633 residues: ABC transporter G family member 1 (633 aa).

Residues 23-265 (LTWEDLWVTA…FALSGFPCPT (243 aa)) enclose the ABC transporter domain. An ATP-binding site is contributed by 60–67 (GPSGSGKS). The region spanning 340 to 552 (TQSLVLTRRS…AYEGMFKNEF (213 aa)) is the ABC transmembrane type-2 domain. Residue asparagine 352 is glycosylated (N-linked (GlcNAc...) asparagine). The next 6 membrane-spanning stretches (helical) occupy residues 364-384 (LAVYVVIAVGLGSLYYDVGFS), 394-414 (MLMFVASFITFMAIGGFPSFV), 440-460 (LSAMPYLLLVSLIPGAIAYFM), 470-490 (FIYFALVLFTCMMIVESLMMI), 498-518 (FLMGLIAGAGIQALMLLSGGF), and 580-600 (IDLVILLGMLVLYRVLFLLVV).

This sequence belongs to the ABC transporter superfamily. ABCG family. Homodimer. As to expression, restricted to the petals, with the highest expression in the limb and, to a lesser extent, in petal tubes, probably in both epidermal and mesophyll cell layers.

The protein localises to the cell membrane. Its function is as follows. ABC transporter controlling the release of volatile organic compounds (VOCs), including floral volatile benzenoids and phenylpropanoids (FVBP), in flowers of fragrant cultivars (e.g. cv. Mitchell and cv. V26). This scent, mostly produced in the evening and night by the petals, attracts the pollinators (e.g. the night-active hawkmoth pollinator Manduca sexta). The sequence is that of ABC transporter G family member 1 from Petunia hybrida (Petunia).